Consider the following 69-residue polypeptide: Cytochrome c oxidase subunit 8A, mitochondrial (69 aa).

The transit peptide at 1–25 directs the protein to the mitochondrion; it reads MSSLTPLLLRSLTGPARRLMVPRAQ. The short motif at 2 to 19 is the SIFI-degron element; that stretch reads SSLTPLLLRSLTGPARRL. Residues 26–36 lie on the Mitochondrial matrix side of the membrane; it reads VHSKPPREQLG. A helical transmembrane segment spans residues 37 to 60; that stretch reads VLDITIGLTSCFVCCLLPAGWVLS. Residues 61 to 69 lie on the Mitochondrial intermembrane side of the membrane; the sequence is HLESYKKRE.

It belongs to the cytochrome c oxidase VIII family. Component of the cytochrome c oxidase (complex IV, CIV), a multisubunit enzyme composed of 14 subunits. The complex is composed of a catalytic core of 3 subunits MT-CO1, MT-CO2 and MT-CO3, encoded in the mitochondrial DNA, and 11 supernumerary subunits COX4I, COX5A, COX5B, COX6A, COX6B, COX6C, COX7A, COX7B, COX7C, COX8 and NDUFA4, which are encoded in the nuclear genome. The complex exists as a monomer or a dimer and forms supercomplexes (SCs) in the inner mitochondrial membrane with NADH-ubiquinone oxidoreductase (complex I, CI) and ubiquinol-cytochrome c oxidoreductase (cytochrome b-c1 complex, complex III, CIII), resulting in different assemblies (supercomplex SCI(1)III(2)IV(1) and megacomplex MCI(2)III(2)IV(2)). In terms of processing, in response to mitochondrial stress, the precursor protein is ubiquitinated by the SIFI complex in the cytoplasm before mitochondrial import, leading to its degradation. Within the SIFI complex, UBR4 initiates ubiquitin chain that are further elongated or branched by KCMF1.

The protein resides in the mitochondrion inner membrane. It functions in the pathway energy metabolism; oxidative phosphorylation. Functionally, component of the cytochrome c oxidase, the last enzyme in the mitochondrial electron transport chain which drives oxidative phosphorylation. The respiratory chain contains 3 multisubunit complexes succinate dehydrogenase (complex II, CII), ubiquinol-cytochrome c oxidoreductase (cytochrome b-c1 complex, complex III, CIII) and cytochrome c oxidase (complex IV, CIV), that cooperate to transfer electrons derived from NADH and succinate to molecular oxygen, creating an electrochemical gradient over the inner membrane that drives transmembrane transport and the ATP synthase. Cytochrome c oxidase is the component of the respiratory chain that catalyzes the reduction of oxygen to water. Electrons originating from reduced cytochrome c in the intermembrane space (IMS) are transferred via the dinuclear copper A center (CU(A)) of subunit 2 and heme A of subunit 1 to the active site in subunit 1, a binuclear center (BNC) formed by heme A3 and copper B (CU(B)). The BNC reduces molecular oxygen to 2 water molecules using 4 electrons from cytochrome c in the IMS and 4 protons from the mitochondrial matrix. This Rattus norvegicus (Rat) protein is Cytochrome c oxidase subunit 8A, mitochondrial (Cox8a).